Consider the following 311-residue polypeptide: DNA-directed RNA polymerase subunit alpha (311 aa).

An alpha N-terminal domain (alpha-NTD) region spans residues 1–227 (MAQFQIECIE…NLFCSLRNLD (227 aa)). The interval 239–311 (DKKISQVLIE…GISLPKEKSD (73 aa)) is alpha C-terminal domain (alpha-CTD).

It belongs to the RNA polymerase alpha chain family. As to quaternary structure, in plastids the minimal PEP RNA polymerase catalytic core is composed of four subunits: alpha, beta, beta', and beta''. When a (nuclear-encoded) sigma factor is associated with the core the holoenzyme is formed, which can initiate transcription.

The protein resides in the plastid. Its subcellular location is the chloroplast. The catalysed reaction is RNA(n) + a ribonucleoside 5'-triphosphate = RNA(n+1) + diphosphate. DNA-dependent RNA polymerase catalyzes the transcription of DNA into RNA using the four ribonucleoside triphosphates as substrates. In Pyropia yezoensis (Susabi-nori), this protein is DNA-directed RNA polymerase subunit alpha.